Here is a 466-residue protein sequence, read N- to C-terminus: Lipase 2 (466 aa).

The first 16 residues, Met1–Ala16, serve as a signal peptide directing secretion. Cys112 and Cys285 form a disulfide bridge. The Charge relay system role is filled by Ser196. Residues Asn231, Asn319, and Asn331 are each glycosylated (N-linked (GlcNAc...) asparagine). Active-site charge relay system residues include Asp348 and His381. Cys364 and Cys409 are joined by a disulfide. N-linked (GlcNAc...) asparagine glycans are attached at residues Asn422 and Asn451.

The protein belongs to the AB hydrolase superfamily. Lipase family. Class Lip subfamily.

It localises to the secreted. It carries out the reaction a triacylglycerol + H2O = a diacylglycerol + a fatty acid + H(+). Functionally, secreted lipase that is able to hydrolyze both the neutral triacylglycerols and the monopalmitate ester Tween 40, allowing the use of hydrolyzed products as carbon sources. Has broad lipolytic activity, which may be important for colonization and subsequent infection, therefore contributing to the persistence and virulence in human tissue. My be important for alimentary tract colonization, but not oral infection. Facilitates invasive disease via lipid-based suppression of the IL-17 response. Inhibits IL-17 production indirectly by suppressing IL-23 production by tissue-resident dendritic cells. The protein is Lipase 2 of Candida albicans (strain SC5314 / ATCC MYA-2876) (Yeast).